The sequence spans 315 residues: Taste receptor type 2 member 3 (315 aa).

At 1 to 5 (MGLTD) the chain is on the extracellular side. A helical transmembrane segment spans residues 6 to 26 (GVFLIVCGAQFTLGILXNGFI). Residues 27–41 (GLVNGRSWFKTKRMS) are Cytoplasmic-facing. Residues 42 to 62 (LSDFIIATLALSRIILLCIIL) form a helical membrane-spanning segment. Residues 63–93 (TDSFLIVFSVKEHDSGIIMQLIDVFWTFTNH) are Extracellular-facing. Residues 94–114 (LSIWFATCLGVLYCLKIASFS) form a helical membrane-spanning segment. Over 115-127 (HPTFLWLKWRVSR) the chain is Cytoplasmic. Residues 128–148 (VMVWMLLGALLLSCGSTASLI) traverse the membrane as a helical segment. The Extracellular segment spans residues 149–185 (NEFKLYSVLRGIEATRNVTEHFRKKRNEYYLIHVLGT). Asn-165 carries N-linked (GlcNAc...) asparagine glycosylation. Residues 186 to 206 (LWYLPPLVVSLASYFLLIFSL) traverse the membrane as a helical segment. Residues 207-233 (GRHTRQMLQNSTSSRDPSTEAHKRAIR) are Cytoplasmic-facing. A helical membrane pass occupies residues 234–254 (IILSFFFLFLLYFLAFLIASF). Residues 255–265 (GNFLPETKMAK) are Extracellular-facing. Residues 266–286 (MIGEVMTMFYPAGHSFIVILG) form a helical membrane-spanning segment. The Cytoplasmic segment spans residues 287 to 315 (NSKLKQTFVEMLRCESGHLKPGSKGPIFS).

It belongs to the G-protein coupled receptor T2R family.

Its subcellular location is the membrane. Gustducin-coupled receptor implicated in the perception of bitter compounds in the oral cavity and the gastrointestinal tract. Signals through PLCB2 and the calcium-regulated cation channel TRPM5. This is Taste receptor type 2 member 3 (TAS2R3) from Papio hamadryas (Hamadryas baboon).